The chain runs to 571 residues: Polypeptide N-acetylgalactosaminyltransferase 2 (571 aa).

Residues 1-6 are Cytoplasmic-facing; that stretch reads MRRRSR. The helical; Signal-anchor for type II membrane protein transmembrane segment at 7 to 24 threads the bilayer; that stretch reads MLLCFAFLWVLGIAYYMY. Topologically, residues 25–571 are lumenal; sequence SGGGSALAGG…QWKFTLNLQQ (547 aa). An O-linked (Xyl...) (chondroitin sulfate) serine glycan is attached at serine 29. Basic and acidic residues predominate over residues 53 to 66; sequence KKDLHHSNGEEKAQ. The interval 53–74 is disordered; the sequence is KKDLHHSNGEEKAQSMETLPPG. Disulfide bonds link cysteine 126–cysteine 354, cysteine 345–cysteine 423, cysteine 456–cysteine 473, and cysteine 496–cysteine 513. A catalytic subdomain A region spans residues 135–240; sequence LPATSVVITF…EHWLEPLLER (106 aa). Threonine 143, aspartate 176, and arginine 201 together coordinate substrate. Residue aspartate 224 coordinates Mn(2+). Serine 225 is a substrate binding site. Position 226 (histidine 226) interacts with Mn(2+). The tract at residues 300–362 is catalytic subdomain B; the sequence is PIKTPMIAGG…PCSRVGHVFR (63 aa). Tryptophan 331 contributes to the substrate binding site. Residue histidine 359 coordinates Mn(2+). Substrate is bound by residues arginine 362, histidine 365, and tyrosine 367. The Ricin B-type lectin domain maps to 443 to 566; that stretch reads QDIAFGALQQ…PALSQQWKFT (124 aa). Serine 536 carries the phosphoserine modification. Cysteines 539 and 555 form a disulfide.

The protein belongs to the glycosyltransferase 2 family. GalNAc-T subfamily. It depends on Mn(2+) as a cofactor. In terms of tissue distribution, detected in urine (at protein level). Widely expressed.

It is found in the golgi apparatus. The protein localises to the golgi stack membrane. It localises to the secreted. The enzyme catalyses L-seryl-[protein] + UDP-N-acetyl-alpha-D-galactosamine = a 3-O-[N-acetyl-alpha-D-galactosaminyl]-L-seryl-[protein] + UDP + H(+). The catalysed reaction is L-threonyl-[protein] + UDP-N-acetyl-alpha-D-galactosamine = a 3-O-[N-acetyl-alpha-D-galactosaminyl]-L-threonyl-[protein] + UDP + H(+). It participates in protein modification; protein glycosylation. Its function is as follows. Catalyzes the initial reaction in O-linked oligosaccharide biosynthesis, the transfer of an N-acetyl-D-galactosamine residue to a serine or threonine residue on the protein receptor. Has a broad spectrum of substrates for peptides such as EA2, Muc5AC, Muc1a, Muc1b. Probably involved in O-linked glycosylation of the immunoglobulin A1 (IgA1) hinge region. Involved in O-linked glycosylation of APOC-III, ANGPTL3 and PLTP. It participates in the regulation of HDL-C metabolism. The chain is Polypeptide N-acetylgalactosaminyltransferase 2 (GALNT2) from Homo sapiens (Human).